Consider the following 2617-residue polypeptide: Non-reducing polyketide synthase epaA (2617 aa).

The tract at residues 95 to 231 (PNILLSPMVV…AARSISSLQQ (137 aa)) is N-terminal acylcarrier protein transacylase domain (SAT). Cysteine 132 acts as the Nucleophile; for transacylase activity in catalysis. Histidine 250 functions as the Proton donor/acceptor; for transacylase activity in the catalytic mechanism. The Ketosynthase family 3 (KS3) domain maps to 372 to 790 (PNEIAVIGMS…GSNASMVVAQ (419 aa)). Residues cysteine 539, histidine 674, and histidine 713 each act as for beta-ketoacyl synthase activity in the active site. The tract at residues 902–1193 (FGGQISNYVG…ITSMASRALG (292 aa)) is malonyl-CoA:ACP transacylase (MAT) domain. Residues 1282–1413 (PKTLWSLIEA…GKLAFLSGQD (132 aa)) form an N-terminal hotdog fold region. Residues 1282–1591 (PKTLWSLIEA…YHKVAKASMS (310 aa)) form the PKS/mFAS DH domain. The tract at residues 1310–1589 (LVSGHVIANT…INYHKVAKAS (280 aa)) is product template (PT) domain. Catalysis depends on histidine 1314, which acts as the Proton acceptor; for dehydratase activity. Residues 1443–1591 (ADDIIQGRNI…YHKVAKASMS (149 aa)) are C-terminal hotdog fold. The active-site Proton donor; for dehydratase activity is aspartate 1499. The interval 1600–1651 (TEAAPSSSTRAHPTSSSSPRLPGPSVPEDKSQNETQPAGTNAVAKKKSEKSA) is disordered. The segment covering 1602-1619 (AAPSSSTRAHPTSSSSPR) has biased composition (low complexity). Residues 1653 to 1727 (QNVLEKTRAL…GLVEYVQSAV (75 aa)) form the Carrier domain. Serine 1687 carries the post-translational modification O-(pantetheine 4'-phosphoryl)serine. The disordered stretch occupies residues 1728–1799 (GVPTNGDEPD…PAMPPASSKT (72 aa)). Residues 1750-1766 (LAPSPSSSSSSTNLTED) show a composition bias toward low complexity. A compositionally biased stretch (polar residues) spans 1769–1785 (LDQAETTTNISSYPGQT). The tract at residues 1970-2158 (DSLLNKLSYR…VGYGQVDWTD (189 aa)) is methyltransferase domain. The tract at residues 2240–2485 (ITGATGSLGV…LCWTPVNDVA (246 aa)) is NADPH-binding (R) domain.

Pantetheine 4'-phosphate is required as a cofactor.

Its pathway is secondary metabolite biosynthesis. In terms of biological role, non-reducing polyketide synthase; part of the gene cluster that mediates the biosynthesis of nigerpyrone and its derivatives carbonarone A and pestalamide A. The biosynthesis pathway begins with the polyketide assembly by epaA to form phenylacetyl triketide precursor from successive condensation of two malonyl-CoA, presumably with one phenylacetyl-CoA starter unit produced by the phenylacetyl-CoA ligase epaB. For the nigerpyrone biosynthesis, the reactive polyketide chain is released as an aldehyde through the R-domain. A nonenzymatic cyclization and dehydration may create nigerpyrone. For the biosynthesis of carbonarone A and pestalamide A, an extra methyl group is added through the C-methyltransferase domain. Several further steps involving the dehydrogenase orf1, the cytochrome P450 monooxygenase orf2 and the FAD-dependent monooxygenase orf3 are required to form a carbonarone A precursor which is converted to carbonarone A via cyclization. The O-acetyltransferase epaC could catalyze the transfer of 2-methylsuccinyl-CoA, a common intermediate in the ethylmalonyl-CoA pathway, to generate the final product pestalamide A. This Aspergillus niger (strain ATCC MYA-4892 / CBS 513.88 / FGSC A1513) protein is Non-reducing polyketide synthase epaA.